Reading from the N-terminus, the 423-residue chain is Limonoid 21-O-acetyltransferse (423 aa).

Active-site proton acceptor residues include His152 and Asp362.

Belongs to the plant acyltransferase family. Monomer. As to expression, mainly expressed in petioles.

The enzyme catalyses isomeliandiol + acetyl-CoA = 21-O-acetyl-isomeliandiol + CoA. It participates in secondary metabolite biosynthesis; terpenoid biosynthesis. Its function is as follows. Acetyltransferase involved in the biosynthesis of limonoids triterpene natural products such as azadirachtin, an antifeedant widely used as bioinsecticide, and possessing many medicinal applications including anti-tumoral, anti-malarial, anti-rheumatic, antibacterial, anti-inflammatory, anti-pyretic and diuretic effects. Catalyzes the formation of 21-O-acetyl-isomeliandiol from isomeliandiol. The sequence is that of Limonoid 21-O-acetyltransferse from Melia azedarach (Chinaberry tree).